The sequence spans 322 residues: Heat-inducible transcription repressor HrcA (322 aa).

Belongs to the HrcA family.

Its function is as follows. Negative regulator of class I heat shock genes (grpE-dnaK-dnaJ and groELS operons). Prevents heat-shock induction of these operons. The sequence is that of Heat-inducible transcription repressor HrcA from Staphylococcus carnosus (strain TM300).